We begin with the raw amino-acid sequence, 183 residues long: MSIGRVVVLTGPSGVGKGTLLKAILSQHPEAFLSISATTRSPRPGEVDGQHYYFLSREEFQTKIAEQEFLEWAEFAGNLYGTPRSPVIEQVNLGRTVILEIELEGARQVRKTLPSARQVVLLPPSVEELEQRIRERATEDEAAIARRLLQAQTEIGAAKEFDRCVINDQLDTAITALEAAIFS.

The Guanylate kinase-like domain occupies 4-182; that stretch reads GRVVVLTGPS…AITALEAAIF (179 aa). 11 to 18 is an ATP binding site; that stretch reads GPSGVGKG.

It belongs to the guanylate kinase family.

It is found in the cytoplasm. It carries out the reaction GMP + ATP = GDP + ADP. It catalyses the reaction dZMP + ATP = dZDP + ADP. It participates in purine metabolism. Essential for recycling GMP and indirectly, cGMP. Its function is as follows. (Microbial infection) Catalyzes the phosphorylation of dZMP to dZDP, when the bacterium is infected by a phage that produces the substrate for the synthesis of dZTP (2- amino-2'-deoxyadenosine 5'-triphosphate), which is then used by the phage as a DNA polymerase substrate. The polypeptide is Guanylate kinase (Synechococcus sp. (strain ATCC 27144 / PCC 6301 / SAUG 1402/1) (Anacystis nidulans)).